The chain runs to 210 residues: Thiamine-phosphate synthase (210 aa).

4-amino-2-methyl-5-(diphosphooxymethyl)pyrimidine is bound by residues 39–43 (QLREK) and asparagine 71. 2 residues coordinate Mg(2+): aspartate 72 and aspartate 91. Serine 110 contacts 4-amino-2-methyl-5-(diphosphooxymethyl)pyrimidine. Residue 134–136 (TPT) participates in 2-[(2R,5Z)-2-carboxy-4-methylthiazol-5(2H)-ylidene]ethyl phosphate binding. Residue lysine 137 participates in 4-amino-2-methyl-5-(diphosphooxymethyl)pyrimidine binding. Position 163 (glycine 163) interacts with 2-[(2R,5Z)-2-carboxy-4-methylthiazol-5(2H)-ylidene]ethyl phosphate.

It belongs to the thiamine-phosphate synthase family. Mg(2+) is required as a cofactor.

The catalysed reaction is 2-[(2R,5Z)-2-carboxy-4-methylthiazol-5(2H)-ylidene]ethyl phosphate + 4-amino-2-methyl-5-(diphosphooxymethyl)pyrimidine + 2 H(+) = thiamine phosphate + CO2 + diphosphate. The enzyme catalyses 2-(2-carboxy-4-methylthiazol-5-yl)ethyl phosphate + 4-amino-2-methyl-5-(diphosphooxymethyl)pyrimidine + 2 H(+) = thiamine phosphate + CO2 + diphosphate. It carries out the reaction 4-methyl-5-(2-phosphooxyethyl)-thiazole + 4-amino-2-methyl-5-(diphosphooxymethyl)pyrimidine + H(+) = thiamine phosphate + diphosphate. Its pathway is cofactor biosynthesis; thiamine diphosphate biosynthesis; thiamine phosphate from 4-amino-2-methyl-5-diphosphomethylpyrimidine and 4-methyl-5-(2-phosphoethyl)-thiazole: step 1/1. In terms of biological role, condenses 4-methyl-5-(beta-hydroxyethyl)thiazole monophosphate (THZ-P) and 2-methyl-4-amino-5-hydroxymethyl pyrimidine pyrophosphate (HMP-PP) to form thiamine monophosphate (TMP). The protein is Thiamine-phosphate synthase of Campylobacter jejuni subsp. jejuni serotype O:6 (strain 81116 / NCTC 11828).